The following is a 520-amino-acid chain: Pleckstrin homology domain-containing family O member 1-A (520 aa).

Disordered stretches follow at residues 1-23 (MKKS…QPDK), 208-296 (SLDK…GHLQ), 313-439 (IQEQ…KSTD), and 497-520 (QARQ…QKSP). Positions 20 to 131 (QPDKVGWIRR…WINVLNTAIT (112 aa)) constitute a PH domain. The segment covering 227 to 241 (PASNTEAQEKTSSLP) has biased composition (polar residues). Basic and acidic residues-rich tracts occupy residues 242–255 (RKSE…DHPR) and 333–347 (DSPR…DSPH). A compositionally biased stretch (low complexity) spans 348–361 (SKGSSSPHSANSPS). 2 stretches are compositionally biased toward basic and acidic residues: residues 363 to 385 (RAKD…DSPR) and 396 to 418 (KSID…DLTH). The span at 420-439 (KGSQSPLSTGSNSPHMKSTD) shows a compositional bias: polar residues. The segment covering 497–506 (QARQRREELS) has biased composition (basic and acidic residues). Polar residues predominate over residues 509-520 (GMASQKLQQKSP).

C-terminal fragments could be released during apoptosis via caspase-3-dependent cleavage.

Its subcellular location is the membrane. The protein resides in the nucleus. It is found in the cytoplasm. In terms of biological role, plays a role in the regulation of the actin cytoskeleton through its interactions with actin capping protein (CP). This is Pleckstrin homology domain-containing family O member 1-A (plekho1a) from Danio rerio (Zebrafish).